The sequence spans 244 residues: Cyclin-Q (244 aa).

The protein belongs to the cyclin family. Cyclin-like FAM58 subfamily.

In terms of biological role, may be an activating cyclin for the cyclin-associated kinase CDK10. In Xenopus laevis (African clawed frog), this protein is Cyclin-Q (ccnq).